Consider the following 427-residue polypeptide: MAITDVDVFAHLTDADIENLAAELDAIRRDVEESRGERDARYIRRTIAAQRALEVSGRLLLAGSSRRLAWWTGALTLGVAKIIENMEIGHNVMHGQWDWMNDPEIHSSTWEWDMSGSSKHWRYTHNFVHHKYTNILGMDDDVGYGMLRVTRDQRWKRYNIFNVVWNTILAIGFEWGVALQHLEIGKIFKGRADREAAKTRLREFSAKAGRQVFKDYVAFPALTSLSPGATYRSTLTANVVANVIRNVWSNAVIFCGHFPDGAEKFTKTDMIGEPKGQWYLRQMLGSANFNAGPALRFMSGNLCHQIEHHLYPDLPSNRLHEISVRVREVCDRYDLPYTTGSFLVQYGKTWRTLAKLSLPDKYLRDNADDAPETRSERMFAGLGPGFAGADPVTGRRRGLKTAIAAVRGRRRSKRMAKSVTEPDDLAA.

Residues histidine 90, histidine 94, histidine 125, histidine 129, histidine 130, histidine 304, histidine 308, and histidine 309 each contribute to the Fe cation site.

The protein belongs to the fatty acid desaturase type 1 family. Interacts with the electron transfer protein Rv3230c to form a functional acyl-CoA desaturase complex. The cofactor is Fe(2+). In terms of processing, is rapidly degraded by a mycobacterial protein degradation system that specifically targets the residues LAA at the C-terminus, leading to a post-translational proteolytic regulation of DesA3 essential activity.

The protein resides in the cell membrane. The enzyme catalyses octadecanoyl-CoA + NADPH + O2 + H(+) = (9Z)-octadecenoyl-CoA + NADP(+) + 2 H2O. It participates in lipid metabolism; fatty acid metabolism. Is likely involved in the aerobic desaturation system responsible for the synthesis of oleic acid from stearoyl-CoA; oleic acid is a precursor of mycobacterial membrane phospholipids and triglycerides. Catalyzes the conversion of stearoyl-CoA to oleoyl-CoA by introduction of a cis double bond between carbons 9 and 10 of the acyl chain. Requires the electron transfer partner Rv3230c to pass two electrons from NADPH to its active site diiron center. Is also able to catalyze the 9-desaturation of palmitoyl-CoA to palmitoleoyl-CoA. The polypeptide is NADPH-dependent stearoyl-CoA 9-desaturase (desA3) (Mycobacterium tuberculosis (strain CDC 1551 / Oshkosh)).